Reading from the N-terminus, the 365-residue chain is Isopentenyl-diphosphate delta-isomerase (365 aa).

Residue 8–9 (RK) coordinates substrate. Residues 67 to 69 (SIT), serine 97, and asparagine 126 contribute to the FMN site. 97 to 99 (SQR) contacts substrate. Glutamine 160 is a substrate binding site. Glutamate 161 serves as a coordination point for Mg(2+). FMN contacts are provided by residues lysine 192, threonine 222, 272-274 (GIR), and 293-294 (AL).

This sequence belongs to the IPP isomerase type 2 family. Homooctamer. Dimer of tetramers. It depends on FMN as a cofactor. Requires NADPH as cofactor. Mg(2+) serves as cofactor.

The protein localises to the cytoplasm. The catalysed reaction is isopentenyl diphosphate = dimethylallyl diphosphate. In terms of biological role, involved in the biosynthesis of isoprenoids. Catalyzes the 1,3-allylic rearrangement of the homoallylic substrate isopentenyl (IPP) to its allylic isomer, dimethylallyl diphosphate (DMAPP). This is Isopentenyl-diphosphate delta-isomerase from Methanosarcina barkeri (strain Fusaro / DSM 804).